A 134-amino-acid chain; its full sequence is Acyl carrier protein, chloroplastic (134 aa).

The transit peptide at methionine 1–cysteine 51 directs the protein to the chloroplast. In terms of domain architecture, Carrier spans proline 55–valine 130. Serine 90 carries the post-translational modification O-(pantetheine 4'-phosphoryl)serine.

Belongs to the acyl carrier protein (ACP) family. In terms of processing, 4'-phosphopantetheine is transferred from CoA to a specific serine of apo-ACP by acpS. This modification is essential for activity because fatty acids are bound in thioester linkage to the sulfhydryl of the prosthetic group. In terms of tissue distribution, seed.

It is found in the plastid. The protein localises to the chloroplast. It functions in the pathway lipid metabolism; fatty acid biosynthesis. Its function is as follows. Carrier of the growing fatty acid chain in fatty acid biosynthesis. This Brassica napus (Rape) protein is Acyl carrier protein, chloroplastic (ACL1.A2).